An 805-amino-acid chain; its full sequence is MFDITRKCVEWGDRLLVIESGKIARQADGAVVVDYGGTSVLSTVVSQKSKEPVDFLPLTVQFLAKSYAIGRIPGGFFKREGKPSDRETLISRLVDRSIRPLFPTGFCDEIVIVCNLLSYDQVSPPETVALIGAAAALAISGIPFPTPIAGAKIGYIREEERYILNPSAEELARSELDMFYSGTKSSVVMVESEASELSEEEMLGAVTFGHENCAQVLDLIEEFAEAAGPKDVVEFVPHDIGKVVSDISSGYSEKFSVAYSDHNKKPECSSLMPPGKACTQICAGKHVEESGEYTEQEVLLAIKTFERSLVRARVLDTLKRVDGRGFDQIRNIEIEVDLIPRSHGSALFTRGDTQALVITALGTPQDEQVVDGFDGDRRERFLLHYNFPSYAVGEAAALRPPGRREIGHGKLAWRAIHPVLPTKADFPYTIRVVSEITESDGSSSMATVCGASLALMDTGVPLKSSVAGIAMGLIKEGDRYAVLSDIIGDEDYLGDMDFKVAGTKDGITALQMDMKIRGIGFDIIEKSLQQAKDGRLFIIGKMDKVIKESREGVRDHVPRMESMIIDKNKIKNVIGTGGKNVREICEKTGVKIEISQDGTVMIYAVSRDAVEEAKNMIMCIVSEPEVGKVFSGVISEIAKYGAFVSFLGGRRGLVHISEIKNEHIGSVSDVLAVDDKVKVLVIGIDKDHVQLSMRRVDQDSGDLLEHESYSSNKKNGPQFGDASGGASGFRDYASGPARERRRSGGSGGRPVRRRSAGSSGSGSGGCYSVPQHVGTPDPVHGNDRRRGSGPQHASGGGGNKKPRFF.

Positions 491 and 497 each coordinate Mg(2+). In terms of domain architecture, KH spans 558–617 (PRMESMIIDKNKIKNVIGTGGKNVREICEKTGVKIEISQDGTVMIYAVSRDAVEEAKNMI). The region spanning 627 to 694 (GKVFSGVISE…DKDHVQLSMR (68 aa)) is the S1 motif domain. Positions 702 to 805 (DLLEHESYSS…GGGNKKPRFF (104 aa)) are disordered.

It belongs to the polyribonucleotide nucleotidyltransferase family. It depends on Mg(2+) as a cofactor.

It localises to the cytoplasm. It carries out the reaction RNA(n+1) + phosphate = RNA(n) + a ribonucleoside 5'-diphosphate. Involved in mRNA degradation. Catalyzes the phosphorolysis of single-stranded polyribonucleotides processively in the 3'- to 5'-direction. This Anaplasma marginale (strain Florida) protein is Polyribonucleotide nucleotidyltransferase.